Consider the following 224-residue polypeptide: Phosphoribosylformylglycinamidine synthase subunit PurQ (224 aa).

The Glutamine amidotransferase type-1 domain occupies 2 to 224 (KFAVIVFPGS…IVDNFVKGGV (223 aa)). Cys-86 functions as the Nucleophile in the catalytic mechanism. Active-site residues include His-194 and Glu-196.

As to quaternary structure, part of the FGAM synthase complex composed of 1 PurL, 1 PurQ and 2 PurS subunits.

The protein resides in the cytoplasm. The catalysed reaction is N(2)-formyl-N(1)-(5-phospho-beta-D-ribosyl)glycinamide + L-glutamine + ATP + H2O = 2-formamido-N(1)-(5-O-phospho-beta-D-ribosyl)acetamidine + L-glutamate + ADP + phosphate + H(+). It carries out the reaction L-glutamine + H2O = L-glutamate + NH4(+). Its pathway is purine metabolism; IMP biosynthesis via de novo pathway; 5-amino-1-(5-phospho-D-ribosyl)imidazole from N(2)-formyl-N(1)-(5-phospho-D-ribosyl)glycinamide: step 1/2. Its function is as follows. Part of the phosphoribosylformylglycinamidine synthase complex involved in the purines biosynthetic pathway. Catalyzes the ATP-dependent conversion of formylglycinamide ribonucleotide (FGAR) and glutamine to yield formylglycinamidine ribonucleotide (FGAM) and glutamate. The FGAM synthase complex is composed of three subunits. PurQ produces an ammonia molecule by converting glutamine to glutamate. PurL transfers the ammonia molecule to FGAR to form FGAM in an ATP-dependent manner. PurS interacts with PurQ and PurL and is thought to assist in the transfer of the ammonia molecule from PurQ to PurL. This chain is Phosphoribosylformylglycinamidine synthase subunit PurQ, found in Caldanaerobacter subterraneus subsp. tengcongensis (strain DSM 15242 / JCM 11007 / NBRC 100824 / MB4) (Thermoanaerobacter tengcongensis).